Here is a 1823-residue protein sequence, read N- to C-terminus: AF4/FMR2 family member lilli (1823 aa).

Over residues 1–41 the composition is skewed to low complexity; that stretch reads MAQQQQQQHQQQQHHQQQQQQLQQQQQLLQYNNNSYNLNYN. Disordered stretches follow at residues 1–87, 126–305, 422–544, 570–626, 686–712, 753–1057, 1071–1287, 1322–1350, 1413–1448, 1480–1531, 1547–1567, and 1715–1744; these read MAQQ…DPEI, GFGS…ENHI, QQLT…KKKY, AGPG…WHLS, DSRHMDDDEDEQADQQHQQQQQRYGVG, PKNQ…DIPT, AAAQ…LKPR, ARQHHHQPERLKTQQNGHLSSRSAEGART, FMLKQELPARRRKRSSSSSSSPYKEKKRKKEKAEQL, ENSA…AIAS, TCSEAVQTTPPPAAPPPAPRL, and GNTPSSISPSNSVGSQGSGSNTPPGKIVPQ. A compositionally biased stretch (basic and acidic residues) spans 53-79; that stretch reads REKYERQQGIQSDDRETSLFGEPRRLN. Composition is skewed to low complexity over residues 126 to 147, 156 to 174, and 205 to 249; these read GFGSATTSFSSSSSASASSSAS, QQQQQQQQQQQQQHYQQQQ, and PSSS…TSSP. The span at 426–438 shows a compositional bias: pro residues; sequence PTPPKASPTPPVI. Residue Thr-434 is modified to Phosphothreonine. Basic and acidic residues predominate over residues 441–454; that stretch reads LKTEKNHSLEKQDS. A compositionally biased stretch (acidic residues) spans 456–466; that stretch reads LENDLELSESD. 2 positions are modified to phosphoserine: Ser-463 and Ser-465. Low complexity predominate over residues 475 to 531; sequence SAGNSSNSSESDSSESGSEASSKGDPQQQQQQQQQHLLHQQQQHQQQQLLLQQQQQQ. The segment covering 582-598 has biased composition (gly residues); it reads AAGGVGSGSGSTGGGSS. The span at 599-612 shows a compositional bias: low complexity; sequence SSGMGTMSSSNSSN. Residues 764–785 show a composition bias toward low complexity; it reads SDSGSGSSGSGSSSSDSAGGSS. The span at 818-827 shows a compositional bias: polar residues; the sequence is HKAQPNSVTL. The span at 839–849 shows a compositional bias: basic residues; it reads PRQKKPRKKKM. Residues Ser-859 and Ser-860 each carry the phosphoserine modification. Composition is skewed to low complexity over residues 877-906, 917-947, 962-979, 1002-1057, and 1102-1161; these read AATAAAAAANAAAASVMPVAAAAAAAAAPA, QAQQQQQQLQLQQQQQQSGNLSSASASSSQA, GTASSSSSSGTAATVAAG, AAMA…DIPT, and NSSN…QLLQ. A DNA-binding region (a.T hook) is located at residues 908–920; the sequence is KKGRGRPRKQAQQ. Ser-939 and Ser-941 each carry phosphoserine. Residues 1172-1181 show a composition bias toward polar residues; that stretch reads TLKQSAQQRL. Composition is skewed to low complexity over residues 1182 to 1203 and 1253 to 1280; these read SSSDCSSSASSDSSSNSSASSS and QQQQQQQQQQQQQQQQQQQQQQQQQQQQ. Residues 1334–1344 are compositionally biased toward polar residues; the sequence is TQQNGHLSSRS. Residues 1480–1496 show a composition bias toward polar residues; it reads ENSANASPNKLQQQNAR. Ser-1486 is subject to Phosphoserine. Over residues 1497-1531 the composition is skewed to low complexity; sequence QLPLSQSQLQHQHQHQHQLQQQQSQSTATGHAIAS. Over residues 1555–1565 the composition is skewed to pro residues; sequence TPPPAAPPPAP. Residues 1715-1735 show a composition bias toward low complexity; sequence GNTPSSISPSNSVGSQGSGSN.

This sequence belongs to the AF4 family.

It localises to the nucleus. Has a role in transcriptional regulation. Acts in parallel with the Ras/MAPK and the PI3K/PKB pathways in the control of cell identity and cellular growth. Essential for regulation of the cytoskeleton and cell growth but not for cell proliferation or growth rate. Required specifically for the microtubule-based basal transport of lipid droplets. Plays a partially redundant function downstream of Raf in cell fate specification in the developing eye. Pair-rule protein that regulates embryonic cellularization, gastrulation and segmentation. The polypeptide is AF4/FMR2 family member lilli (Drosophila virilis (Fruit fly)).